We begin with the raw amino-acid sequence, 90 residues long: UPF0237 protein PAE3582 (90 aa).

The region spanning 5–74 (VVSVLGADRV…LEEEGKRLGV (70 aa)) is the ACT domain.

It belongs to the UPF0237 family.

The sequence is that of UPF0237 protein PAE3582 from Pyrobaculum aerophilum (strain ATCC 51768 / DSM 7523 / JCM 9630 / CIP 104966 / NBRC 100827 / IM2).